We begin with the raw amino-acid sequence, 222 residues long: 3-dehydroquinate dehydratase (222 aa).

Residues 32–34 (ELR) and R64 contribute to the 3-dehydroquinate site. The active-site Proton donor/acceptor is the H117. K143 functions as the Schiff-base intermediate with substrate in the catalytic mechanism. 3-dehydroquinate is bound at residue R181.

Belongs to the type-I 3-dehydroquinase family. Homodimer.

The enzyme catalyses 3-dehydroquinate = 3-dehydroshikimate + H2O. The protein operates within metabolic intermediate biosynthesis; chorismate biosynthesis; chorismate from D-erythrose 4-phosphate and phosphoenolpyruvate: step 3/7. Involved in the third step of the chorismate pathway, which leads to the biosynthesis of aromatic amino acids. Catalyzes the cis-dehydration of 3-dehydroquinate (DHQ) and introduces the first double bond of the aromatic ring to yield 3-dehydroshikimate. This Aeropyrum pernix (strain ATCC 700893 / DSM 11879 / JCM 9820 / NBRC 100138 / K1) protein is 3-dehydroquinate dehydratase.